Consider the following 108-residue polypeptide: Large ribosomal subunit protein bL31B (108 aa).

The segment at K86–K108 is disordered. A compositionally biased stretch (basic residues) spans K97 to K108.

The protein belongs to the bacterial ribosomal protein bL31 family. Type B subfamily. As to quaternary structure, part of the 50S ribosomal subunit.

This Chlamydia trachomatis serovar L2 (strain ATCC VR-902B / DSM 19102 / 434/Bu) protein is Large ribosomal subunit protein bL31B.